We begin with the raw amino-acid sequence, 268 residues long: Octanoyltransferase (268 aa).

Positions 49–237 (GTQGDVILVV…ALLKALSGEL (189 aa)) constitute a BPL/LPL catalytic domain. Residues 87–94 (RGGRITWH), 167–169 (ALG), and 180–182 (GLA) each bind substrate. Cys198 serves as the catalytic Acyl-thioester intermediate.

It belongs to the LipB family.

The protein localises to the cytoplasm. It carries out the reaction octanoyl-[ACP] + L-lysyl-[protein] = N(6)-octanoyl-L-lysyl-[protein] + holo-[ACP] + H(+). It participates in protein modification; protein lipoylation via endogenous pathway; protein N(6)-(lipoyl)lysine from octanoyl-[acyl-carrier-protein]: step 1/2. In terms of biological role, catalyzes the transfer of endogenously produced octanoic acid from octanoyl-acyl-carrier-protein onto the lipoyl domains of lipoate-dependent enzymes. Lipoyl-ACP can also act as a substrate although octanoyl-ACP is likely to be the physiological substrate. The polypeptide is Octanoyltransferase (Corynebacterium aurimucosum (strain ATCC 700975 / DSM 44827 / CIP 107346 / CN-1) (Corynebacterium nigricans)).